A 105-amino-acid chain; its full sequence is uncharacterized protein (105 aa).

Transmembrane regions (helical) follow at residues 26-46 (NVLIASWLSFVVFLILGCIAI) and 66-86 (SALAWTFFVLAILFGAATLAI).

It is found in the cell membrane. This is an uncharacterized protein from Mycoplasma pneumoniae (strain ATCC 29342 / M129 / Subtype 1) (Mycoplasmoides pneumoniae).